The primary structure comprises 375 residues: Growth/differentiation factor 8 (375 aa).

An N-terminal signal peptide occupies residues 1 to 18; that stretch reads MQRLQICVYIYLFVLIVA. The propeptide occupies 19–266; sequence GPVDLSENSE…VTDTPKRSRR (248 aa). Asn-71 carries N-linked (GlcNAc...) asparagine glycosylation. Intrachain disulfides connect Cys-272–Cys-282, Cys-281–Cys-340, Cys-309–Cys-372, and Cys-313–Cys-374.

This sequence belongs to the TGF-beta family. In terms of assembly, homodimer; disulfide-linked. Interacts with WFIKKN2, leading to inhibit its activity. Interacts with FSTL3. Post-translationally, synthesized as large precursor molecule that undergoes proteolytic cleavage to generate an N-terminal propeptide and a disulfide linked C-terminal dimer, which is the biologically active molecule. The circulating form consists of a latent complex of the C-terminal dimer and other proteins, including its propeptide, which maintain the C-terminal dimer in a latent, inactive state. Ligand activation requires additional cleavage of the prodomain by a tolloid-like metalloproteinase.

The protein localises to the secreted. Acts specifically as a negative regulator of skeletal muscle growth. This Canis lupus familiaris (Dog) protein is Growth/differentiation factor 8 (MSTN).